The following is a 324-amino-acid chain: Adenine deaminase (324 aa).

Positions 8, 10, and 186 each coordinate Zn(2+). Glutamate 189 acts as the Proton donor in catalysis. Zn(2+) is bound at residue aspartate 267. Substrate is bound at residue aspartate 268.

This sequence belongs to the metallo-dependent hydrolases superfamily. Adenosine and AMP deaminases family. Adenine deaminase type 2 subfamily. Zn(2+) serves as cofactor.

It catalyses the reaction adenine + H2O + H(+) = hypoxanthine + NH4(+). Catalyzes the hydrolytic deamination of adenine to hypoxanthine. Plays an important role in the purine salvage pathway and in nitrogen catabolism. The protein is Adenine deaminase of Mesorhizobium japonicum (strain LMG 29417 / CECT 9101 / MAFF 303099) (Mesorhizobium loti (strain MAFF 303099)).